The chain runs to 168 residues: MFVLPDESRQLFKDPFGTLHRDIGTVLPELAGRTIYSVGDVVTHSLQQNGITPAIAVVDGQTMRSPCIKMPEIAGPCIHVKNPPGTITDELVSALTHAVDHTPVTILVDGEEDLAVIPLVIAAPLSSIVIYGQPNEGVVLRIVDDQAKTAARRLLTQFTKTESPIPHN.

GTP contacts are provided by D40, V41, V42, D59, and E112.

The protein belongs to the GTP-dependent DPCK family.

It carries out the reaction 3'-dephospho-CoA + GTP = GDP + CoA + H(+). It participates in cofactor biosynthesis; coenzyme A biosynthesis. Catalyzes the GTP-dependent phosphorylation of the 3'-hydroxyl group of dephosphocoenzyme A to form coenzyme A (CoA). The protein is GTP-dependent dephospho-CoA kinase of Methanoregula boonei (strain DSM 21154 / JCM 14090 / 6A8).